Consider the following 179-residue polypeptide: Methylated-DNA--protein-cysteine methyltransferase (179 aa).

The Nucleophile; methyl group acceptor role is filled by C130.

Belongs to the MGMT family.

The protein resides in the cytoplasm. The catalysed reaction is a 6-O-methyl-2'-deoxyguanosine in DNA + L-cysteinyl-[protein] = S-methyl-L-cysteinyl-[protein] + a 2'-deoxyguanosine in DNA. It catalyses the reaction a 4-O-methyl-thymidine in DNA + L-cysteinyl-[protein] = a thymidine in DNA + S-methyl-L-cysteinyl-[protein]. Its function is as follows. Involved in the cellular defense against the biological effects of O6-methylguanine (O6-MeG) and O4-methylthymine (O4-MeT) in DNA. Repairs the methylated nucleobase in DNA by stoichiometrically transferring the methyl group to a cysteine residue in the enzyme. This is a suicide reaction: the enzyme is irreversibly inactivated. This is Methylated-DNA--protein-cysteine methyltransferase from Haemophilus influenzae (strain ATCC 51907 / DSM 11121 / KW20 / Rd).